A 156-amino-acid polypeptide reads, in one-letter code: Small ribosomal subunit protein uS7 (156 aa).

The protein belongs to the universal ribosomal protein uS7 family. In terms of assembly, part of the 30S ribosomal subunit. Contacts proteins S9 and S11.

One of the primary rRNA binding proteins, it binds directly to 16S rRNA where it nucleates assembly of the head domain of the 30S subunit. Is located at the subunit interface close to the decoding center, probably blocks exit of the E-site tRNA. This is Small ribosomal subunit protein uS7 from Roseobacter denitrificans (strain ATCC 33942 / OCh 114) (Erythrobacter sp. (strain OCh 114)).